A 443-amino-acid chain; its full sequence is sn-2 acyl-lipid omega-3 desaturase (ferredoxin), chloroplastic (443 aa).

The N-terminal 51 residues, 1 to 51, are a transit peptide targeting the chloroplast; the sequence is MAGLVLSGCAIKPFSQSLPIPTKRFITNPSNINLLHPKDPIFSPNFHGFSR. The next 2 helical transmembrane spans lie at 120-140 and 143-163; these read MSYV…AAHL and WLVW…LFVL. A Histidine box-1 motif is present at residues 165 to 169; sequence HDCGH. Positions 201–205 match the Histidine box-2 motif; sequence HRTHH. 2 consecutive transmembrane segments (helical) span residues 281–301 and 304–324; these read TICW…VGPV and LKLY…VTYL. The Histidine box-3 signature appears at 368–372; the sequence is HVIHH.

It belongs to the fatty acid desaturase type 1 family. As to expression, highly expressed in leaves and cotyledons, while no or little expression detected in mature seeds, roots and stems.

It is found in the plastid. The protein localises to the chloroplast membrane. The enzyme catalyses a (7Z,10Z)-hexadecadienoyl-containing glycerolipid + 2 reduced [2Fe-2S]-[ferredoxin] + O2 + 2 H(+) = a (7Z,10Z,13Z)-hexadecatrienoyl-containing glycerolipid + 2 oxidized [2Fe-2S]-[ferredoxin] + 2 H2O. It carries out the reaction a (9Z,12Z)-octadecadienoyl-containing glycerolipid + 2 reduced [2Fe-2S]-[ferredoxin] + O2 + 2 H(+) = (9Z,12Z,15Z)-octadecatrienoyl-containing glycerolipid + 2 oxidized [2Fe-2S]-[ferredoxin] + 2 H2O. It functions in the pathway lipid metabolism; polyunsaturated fatty acid biosynthesis. Chloroplast omega-3 fatty acid desaturase introduces the third double bond in the biosynthesis of 18:3, and probably also 16:3 fatty acids, important constituents of plant membranes. It is thought to use ferredoxin as an electron donor and to act on fatty acids esterified to galactolipids, sulfolipids and phosphatidylglycerol. This is sn-2 acyl-lipid omega-3 desaturase (ferredoxin), chloroplastic from Helianthus annuus (Common sunflower).